We begin with the raw amino-acid sequence, 341 residues long: Glyceraldehyde-3-phosphate dehydrogenase 2 (341 aa).

Residues 13 to 14 (RI), Asp-35, and Lys-85 contribute to the NAD(+) site. D-glyceraldehyde 3-phosphate is bound by residues 157–159 (SCT), Thr-188, 217–218 (TG), and Arg-240. Cys-158 acts as the Nucleophile in catalysis. Asn-322 serves as a coordination point for NAD(+).

This sequence belongs to the glyceraldehyde-3-phosphate dehydrogenase family. Homotetramer.

The protein localises to the cytoplasm. It catalyses the reaction D-glyceraldehyde 3-phosphate + phosphate + NAD(+) = (2R)-3-phospho-glyceroyl phosphate + NADH + H(+). It functions in the pathway carbohydrate degradation; glycolysis; pyruvate from D-glyceraldehyde 3-phosphate: step 1/5. This is Glyceraldehyde-3-phosphate dehydrogenase 2 from Caenorhabditis briggsae.